Consider the following 344-residue polypeptide: L-threonine 3-dehydrogenase (344 aa).

Position 42 (cysteine 42) interacts with Zn(2+). Active-site charge relay system residues include threonine 44 and histidine 47. Zn(2+) contacts are provided by histidine 67, glutamate 68, cysteine 97, cysteine 100, cysteine 103, and cysteine 111. NAD(+) is bound by residues isoleucine 179, aspartate 199, arginine 204, 266–268 (LGI), and 290–291 (IY).

Belongs to the zinc-containing alcohol dehydrogenase family. As to quaternary structure, homotetramer. The cofactor is Zn(2+).

The protein localises to the cytoplasm. It catalyses the reaction L-threonine + NAD(+) = (2S)-2-amino-3-oxobutanoate + NADH + H(+). Its pathway is amino-acid degradation; L-threonine degradation via oxydo-reductase pathway; glycine from L-threonine: step 1/2. Its function is as follows. Catalyzes the NAD(+)-dependent oxidation of L-threonine to 2-amino-3-ketobutyrate. This chain is L-threonine 3-dehydrogenase, found in Sinorhizobium medicae (strain WSM419) (Ensifer medicae).